We begin with the raw amino-acid sequence, 118 residues long: Large ribosomal subunit protein uL18 (118 aa).

The protein belongs to the universal ribosomal protein uL18 family. Part of the 50S ribosomal subunit; part of the 5S rRNA/L5/L18/L25 subcomplex. Contacts the 5S and 23S rRNAs.

Functionally, this is one of the proteins that bind and probably mediate the attachment of the 5S RNA into the large ribosomal subunit, where it forms part of the central protuberance. This is Large ribosomal subunit protein uL18 from Rickettsia felis (strain ATCC VR-1525 / URRWXCal2) (Rickettsia azadi).